Here is a 333-residue protein sequence, read N- to C-terminus: MEVAEANSPTEEEEEEEEEGEETISEPRPHTRSNPEGAEDRALGAQASVGSRSEGEGEAATADGGAASVPGAGPKPWQVPASASEVQIRTPRVNCPEKVIICLDLSEEMSVPKLESFNGSRTNALNVSQKMVEMFVRTKHKIDKSHEFALVVVNDDSAWLSGLTSDPRELCSCLYDLETASCSTFNLEGLFSLIQQKTELPVTENVQTIPPPYVVRTILVYSRPPCQPQFSLTEPMKKMFQCPYFFFDIVYIHNGTEEKEEDMSWKDMFAFMGSLDTKGASYKYEVALAGPALELHNCMAKLLAHPLQRPCQTHASYSLLEEDEEAGEEEATV.

Met1 carries the post-translational modification N-acetylmethionine. Residues Met1–Glu85 are disordered. Ser8 is subject to Phosphoserine. The segment covering Thr10–Ile24 has biased composition (acidic residues). A phosphoserine mark is found at Ser33 and Ser53. Positions Glu58–Ala67 are enriched in low complexity. The VWFA-like stretch occupies residues Val99 to Leu302.

The protein belongs to the BABAM1 family. In terms of assembly, component of the ARISC complex, at least composed of UIMC1/RAP80, ABRAXAS1, BRCC3/BRCC36, BABAM2 and BABAM1/NBA1. Component of the BRCA1-A complex, at least composed of BRCA1, BARD1, UIMC1/RAP80, ABRAXAS1, BRCC3/BRCC36, BABAM2 and BABAM1/NBA1. In the BRCA1-A complex, interacts directly with ABRAXAS1 and BABAM2. Component of the BRISC complex, at least composed of ABRAXAS2, BRCC3/BRCC36, BABAM2 and BABAM1/NBA1. Identified in a complex with SHMT2 and the other subunits of the BRISC complex.

The protein resides in the cytoplasm. It localises to the nucleus. Component of the BRCA1-A complex, a complex that specifically recognizes 'Lys-63'-linked ubiquitinated histones H2A and H2AX at DNA lesions sites, leading to target the BRCA1-BARD1 heterodimer to sites of DNA damage at double-strand breaks (DSBs). The BRCA1-A complex also possesses deubiquitinase activity that specifically removes 'Lys-63'-linked ubiquitin on histones H2A and H2AX. In the BRCA1-A complex, it is required for the complex integrity and its localization at DSBs. Component of the BRISC complex, a multiprotein complex that specifically cleaves 'Lys-63'-linked ubiquitin in various substrates. In these 2 complexes, it is probably required to maintain the stability of BABAM2 and help the 'Lys-63'-linked deubiquitinase activity mediated by BRCC3/BRCC36 component. The BRISC complex is required for normal mitotic spindle assembly and microtubule attachment to kinetochores via its role in deubiquitinating NUMA1. Plays a role in interferon signaling via its role in the deubiquitination of the interferon receptor IFNAR1; deubiquitination increases IFNAR1 activity by enhancing its stability and cell surface expression. Down-regulates the response to bacterial lipopolysaccharide (LPS) via its role in IFNAR1 deubiquitination. This chain is BRISC and BRCA1-A complex member 1 (Babam1), found in Mus musculus (Mouse).